Reading from the N-terminus, the 1255-residue chain is ATP-binding cassette sub-family B member 5 (1255 aa).

A helical membrane pass occupies residues 46 to 66 (IVLMTLGILASMINGATVPLM). An ABC transmembrane type-1 1 domain is found at 51 to 351 (LGILASMING…SVAPHLETFT (301 aa)). Residues Asn86 and Asn92 are each glycosylated (N-linked (GlcNAc...) asparagine). A helical membrane pass occupies residues 104–124 (IIVLTLYYIGIGAAALIFGYV). The N-linked (GlcNAc...) asparagine glycan is linked to Asn189. 2 helical membrane-spanning segments follow: residues 290 to 310 (LSLG…FWYG) and 314 to 334 (IFGG…FSVI). N-linked (GlcNAc...) asparagine glycans are attached at residues Asn372 and Asn391. Positions 387–623 (IEFKNVSFSY…QGLYYSLAMA (237 aa)) constitute an ABC transporter 1 domain. Residue 422–429 (GPSGSGKS) participates in ATP binding. A glycan (N-linked (GlcNAc...) asparagine) is linked at Asn643. 2 helical membrane passes run 694–714 (VLGT…SIIF) and 738–758 (MMLV…GLFY). The ABC transmembrane type-1 2 domain occupies 694-981 (VLGTLASALN…TLVWAPEYSK (288 aa)). Asn790 is a glycosylation site (N-linked (GlcNAc...) asparagine). Transmembrane regions (helical) follow at residues 814-836 (LGIV…IYGW), 841-863 (LILS…MAGF), and 955-975 (MFIV…TLVW). The region spanning 1016-1254 (LEFREVSFVY…GDTYFKLVAA (239 aa)) is the ABC transporter 2 domain. Asn1036 carries N-linked (GlcNAc...) asparagine glycosylation. 1051 to 1058 (GSSGCGKS) is an ATP binding site. Asn1105, Asn1189, and Asn1229 each carry an N-linked (GlcNAc...) asparagine glycan.

This sequence belongs to the ABC transporter superfamily. ABCB family. Multidrug resistance exporter (TC 3.A.1.201) subfamily. As to expression, in developing eye, expressed in basal limbal epithelium but not in central cornea. Acts as a marker of limbal stem cells.

It localises to the cell membrane. The catalysed reaction is daunorubicin(in) + ATP + H2O = daunorubicin(out) + ADP + phosphate + H(+). Functionally, energy-dependent efflux transporter responsible for decreased drug accumulation in multidrug-resistant cells. Specifically present in limbal stem cells, where it plays a key role in corneal development and repair. The chain is ATP-binding cassette sub-family B member 5 from Mus musculus (Mouse).